The primary structure comprises 192 residues: MLPPALNIPKWLEENSHLLQPPVNNYCVYHPSSPATAGYTVMIVGGPNARTDYHINTTPEFFYQYRGSMLLKTVDTSVSPPVFQDIPIHEGSIFLLPANTPHCPVRFKDTVGVVMEQPRPKDAVDTMLWFCKKCGEVVWEKRFVCTDLGTQVKEVVEEFAADQEKRTCKACGTIAETRYQEGEVVQPPRFLE.

Arginine 50 contacts O2. Fe cation contacts are provided by histidine 54, glutamate 60, and histidine 102. Glutamate 60 contributes to the substrate binding site. Substrate contacts are provided by arginine 106 and glutamate 116. Positions 131, 134, 168, and 171 each coordinate a divalent metal cation.

This sequence belongs to the 3-HAO family. Fe(2+) serves as cofactor.

The protein resides in the cytoplasm. The enzyme catalyses 3-hydroxyanthranilate + O2 = (2Z,4Z)-2-amino-3-carboxymuconate 6-semialdehyde. Its pathway is cofactor biosynthesis; NAD(+) biosynthesis; quinolinate from L-kynurenine: step 3/3. In terms of biological role, catalyzes the oxidative ring opening of 3-hydroxyanthranilate to 2-amino-3-carboxymuconate semialdehyde, which spontaneously cyclizes to quinolinate. This Aspergillus fumigatus (strain CBS 144.89 / FGSC A1163 / CEA10) (Neosartorya fumigata) protein is 3-hydroxyanthranilate 3,4-dioxygenase 1 (bna1-1).